Consider the following 463-residue polypeptide: L-seryl-tRNA(Sec) selenium transferase (463 aa).

Residue Lys-295 is modified to N6-(pyridoxal phosphate)lysine.

The protein belongs to the SelA family. As to quaternary structure, homodecamer; pentamer of dimers. Binds only one seryl-tRNA(Sec) per dimer. Pyridoxal 5'-phosphate is required as a cofactor.

The protein localises to the cytoplasm. The enzyme catalyses L-seryl-tRNA(Sec) + selenophosphate + H(+) = L-selenocysteinyl-tRNA(Sec) + phosphate. The protein operates within aminoacyl-tRNA biosynthesis; selenocysteinyl-tRNA(Sec) biosynthesis; selenocysteinyl-tRNA(Sec) from L-seryl-tRNA(Sec) (bacterial route): step 1/1. Converts seryl-tRNA(Sec) to selenocysteinyl-tRNA(Sec) required for selenoprotein biosynthesis. The chain is L-seryl-tRNA(Sec) selenium transferase from Shigella sonnei (strain Ss046).